The chain runs to 412 residues: BSD domain-containing protein 1 (412 aa).

Residues 146–198 form the BSD domain; it reads WLAYWDPEHRKAEISELLVTSPSIRALYTKMVPAAVSHSEFWQRYFYKVHQLE. Composition is skewed to basic and acidic residues over residues 208–219 and 255–271; these read KQRADQSVHSEE and HVEDKSEKMAELNRDHT. 2 disordered regions span residues 208-228 and 255-383; these read KQRADQSVHSEEPQWEEEEED and HVED…EKDF. The segment covering 272–287 has biased composition (low complexity); sequence SITSPSESSESISPIT. The span at 340–351 shows a compositional bias: basic and acidic residues; sequence THREDPPSDLRV. Over residues 355–374 the composition is skewed to polar residues; the sequence is NSDSGKSTPSNNGQKGSSTD.

The sequence is that of BSD domain-containing protein 1 (bsdc1) from Xenopus tropicalis (Western clawed frog).